The sequence spans 260 residues: Thiazole synthase (260 aa).

The active-site Schiff-base intermediate with DXP is K100. 1-deoxy-D-xylulose 5-phosphate contacts are provided by residues G162, 188–189, and 210–211; these read AG and NT.

Belongs to the ThiG family. In terms of assembly, homotetramer. Forms heterodimers with either ThiH or ThiS.

It is found in the cytoplasm. The catalysed reaction is [ThiS sulfur-carrier protein]-C-terminal-Gly-aminoethanethioate + 2-iminoacetate + 1-deoxy-D-xylulose 5-phosphate = [ThiS sulfur-carrier protein]-C-terminal Gly-Gly + 2-[(2R,5Z)-2-carboxy-4-methylthiazol-5(2H)-ylidene]ethyl phosphate + 2 H2O + H(+). The protein operates within cofactor biosynthesis; thiamine diphosphate biosynthesis. Functionally, catalyzes the rearrangement of 1-deoxy-D-xylulose 5-phosphate (DXP) to produce the thiazole phosphate moiety of thiamine. Sulfur is provided by the thiocarboxylate moiety of the carrier protein ThiS. In vitro, sulfur can be provided by H(2)S. The polypeptide is Thiazole synthase (Wolinella succinogenes (strain ATCC 29543 / DSM 1740 / CCUG 13145 / JCM 31913 / LMG 7466 / NCTC 11488 / FDC 602W) (Vibrio succinogenes)).